The sequence spans 313 residues: DDRGK domain-containing protein 1 (313 aa).

Residues 1–28 traverse the membrane as a helical segment; sequence MVSPVVYLVVAALLVGLILFLTRGRGRA. The segment at 1 to 113 is mediates interaction with CDK5RAP3; the sequence is MVSPVVYLVV…IEKPVETHLS (113 aa). Over 29–313 the chain is Cytoplasmic; the sequence is AAAAQEPLHN…GRETPAQAPA (285 aa). Residues 40-88 form a disordered region; sequence EVPAAAGRVARPQPLEPEEQRAAGRPRRRRDLGSRLQAQRRAQRVAWAD. Ser73 and Ser113 each carry phosphoserine. The span at 73–87 shows a compositional bias: low complexity; sequence SRLQAQRRAQRVAWA. Positions 117 to 215 are mediates interaction with TRIP4; sequence GAKKLRKLEE…MTEEQSHSFL (99 aa). Residues 130–185 form a disordered region; that stretch reads RKAQREAEEAEREERKRLESQREAEWKKEEERLRLEEEQKEEEERKAQEEQAQREH. The UFM1-interacting motif (UFIM) motif lies at 194-208; the sequence is TFVVVEEGVGETMTE. The tract at residues 215-313 is mediates interaction with UFL1; that stretch reads LAEFINYIKQ…GRETPAQAPA (99 aa). The 45-residue stretch at 228-272 folds into the PCI domain; sequence VLLEDLASQVGLRTQDTINRIQDLLAEGTLTGVIDDRGKFIYITP. Lys266 participates in a covalent cross-link: Glycyl lysine isopeptide (Lys-Gly) (interchain with G-Cter in UFM1).

It belongs to the DDRGK1 family. As to quaternary structure, component of the UFM1 ribosome E3 ligase (UREL) complex, composed of UFL1, DDRGK1 and CDK5RAP3. Interacts with (unphosphorylated) ERN1/IRE1-alpha; interaction is dependent on UFM1 and takes place in response to endoplasmic reticulum stress, regulating ERN1/IRE1-alpha stability. Interacts with NFKBIA. Interacts with SOX9. Ubiquitinated. Ubiquitination probably triggers proteasomal degradation and is negatively regulated by UFL1, the enzyme involved in the ufmylation of DDRGK1. In terms of processing, ufmylated; conjugated to ubiquitin-like protein UFM1, probably at Lys-266 by UFL1. The relevance of ufmylation is however unclear: as DDRGK1 acts as a substrate adapter for ufmylation, it is uncertain whether ufmylation is a collateral effect of the ufmylation process or whether it is required to regulate its activity.

The protein resides in the endoplasmic reticulum membrane. Its function is as follows. Component of the UFM1 ribosome E3 ligase (UREL) complex, a multiprotein complex that catalyzes ufmylation of endoplasmic reticulum-docked proteins. The UREL complex plays a key role in ribosome recycling by mediating mono-ufmylation of the RPL26/uL24 subunit of the 60S ribosome following ribosome dissociation: ufmylation weakens the junction between post-termination 60S subunits and SEC61 translocons, promoting release and recycling of the large ribosomal subunit from the endoplasmic reticulum membrane. Ufmylation of RPL26/uL24 and subsequent 60S ribosome recycling either take place after normal termination of translation or after ribosome stalling during cotranslational translocation at the endoplasmic reticulum. Within the UREL complex, DDRGK1 tethers the complex to the endoplasmic reticulum membrane to restrict its activity to endoplasmic reticulum-docked ribosomes and acts as an ufmylation 'reader': following RPL26/uL24 ufmylation, DDRGK1 specifically binds to ufmylated RPL26/uL24 via its UFIM motif, resulting in stable association between the 60S ribosome and the UREL complex, followed by dissociation of the 60S ribosome subunit from the endoplasmic reticulum membrane. The UREL complex is also involved in reticulophagy in response to endoplasmic reticulum stress by promoting ufmylation of proteins such as CYB5R3 and RPN1, thereby promoting lysosomal degradation of ufmylated proteins. Ufmylation-dependent reticulophagy inhibits the unfolded protein response (UPR) by regulating ERN1/IRE1-alpha stability. Acts as a regulator of immunity by promoting differentiation of B-cells into plasma cells: acts by promoting expansion of the endoplasmic reticulum and regulating the unfolded protein response (UPR). May also be required for TRIP4 ufmylation. May play a role in NF-kappa-B-mediated transcription through regulation of the phosphorylation and the degradation of NFKBIA, the inhibitor of NF-kappa-B. Plays a role in cartilage development through SOX9, inhibiting the ubiquitin-mediated proteasomal degradation of this transcriptional regulator. Required for stabilization and ufmylation of ATG9A. The protein is DDRGK domain-containing protein 1 of Bos taurus (Bovine).